Consider the following 160-residue polypeptide: MRDITPDICDQFEDQVTLLNLPLQNFGQRTAFHGEIVTVRCYHDNSKVREVLEQDGTGKVLIVDGHGSCQKALLGDQLAILGIENGWEGIIVYGAVRDVAQMSQMDIGVQALGTCPFKTEKRGVGEVNVTLTMLNQIVQPKHHVYADWNGVLISKEALDF.

Substrate-binding positions include 75-78 (GDQL) and Arg97. Asp98 provides a ligand contact to a divalent metal cation.

This sequence belongs to the class II aldolase/RraA-like family. In terms of assembly, homotrimer. It depends on a divalent metal cation as a cofactor.

The catalysed reaction is 4-hydroxy-4-methyl-2-oxoglutarate = 2 pyruvate. The enzyme catalyses oxaloacetate + H(+) = pyruvate + CO2. Functionally, catalyzes the aldol cleavage of 4-hydroxy-4-methyl-2-oxoglutarate (HMG) into 2 molecules of pyruvate. Also contains a secondary oxaloacetate (OAA) decarboxylase activity due to the common pyruvate enolate transition state formed following C-C bond cleavage in the retro-aldol and decarboxylation reactions. This Vibrio parahaemolyticus serotype O3:K6 (strain RIMD 2210633) protein is Putative 4-hydroxy-4-methyl-2-oxoglutarate aldolase.